Here is a 318-residue protein sequence, read N- to C-terminus: D-alanine--D-alanine ligase (318 aa).

The region spanning 116-311 is the ATP-grasp domain; sequence KQVWQSLGIP…FQQLVLAILA (196 aa). 142-197 contacts ATP; it reads STELGFPLIVKPAHEGSSIGMAKVNSAQELVAAWQDAAKYDSQVLVEQWIHGPEFT. Residues Asp-265, Glu-278, and Asn-280 each contribute to the Mg(2+) site.

Belongs to the D-alanine--D-alanine ligase family. Mg(2+) is required as a cofactor. Requires Mn(2+) as cofactor.

It localises to the cytoplasm. It carries out the reaction 2 D-alanine + ATP = D-alanyl-D-alanine + ADP + phosphate + H(+). It functions in the pathway cell wall biogenesis; peptidoglycan biosynthesis. Cell wall formation. The polypeptide is D-alanine--D-alanine ligase (Pseudomonas putida (strain GB-1)).